A 103-amino-acid polypeptide reads, in one-letter code: N(4)-acetylcytidine amidohydrolase (103 aa).

Positions 6–101 (ITFFQRFQDD…QTQFYVIEFK (96 aa)) constitute an ASCH domain. Residue lysine 21 is the Proton acceptor of the active site. Threonine 24 functions as the Nucleophile in the catalytic mechanism. The Proton donor role is filled by glutamate 74.

It belongs to the N(4)-acetylcytidine amidohydrolase family.

The enzyme catalyses N(4)-acetylcytidine + H2O = cytidine + acetate + H(+). It carries out the reaction N(4)-acetyl-2'-deoxycytidine + H2O = 2'-deoxycytidine + acetate + H(+). The catalysed reaction is N(4)-acetylcytosine + H2O = cytosine + acetate + H(+). Catalyzes the hydrolysis of N(4)-acetylcytidine (ac4C). This chain is N(4)-acetylcytidine amidohydrolase (yqfB), found in Escherichia fergusonii (strain ATCC 35469 / DSM 13698 / CCUG 18766 / IAM 14443 / JCM 21226 / LMG 7866 / NBRC 102419 / NCTC 12128 / CDC 0568-73).